Reading from the N-terminus, the 279-residue chain is Zinc-finger homeodomain protein 1 (279 aa).

The segment covering 1–30 has biased composition (acidic residues); the sequence is MEFEDNNNNNDEEQEEDMNLHEEEEDDDAV. The disordered stretch occupies residues 1–62; the sequence is MEFEDNNNNN…TTSTGGGGGF (62 aa). Residues 75 to 124 form a ZF-HD dimerization-type zinc finger; it reads FRECLKNQAVNIGGHAVDGCGEFMPAGIEGTIDALKCAACGCHRNFHRKE. Disordered stretches follow at residues 128 to 199 and 245 to 279; these read FHHA…TKFT and NNKH…QDQP. A compositionally biased stretch (pro residues) spans 134–143; that stretch reads QHQPPPPPPG. Positions 191 to 254 form a DNA-binding region, homeobox; atypical; that stretch reads RKRHRTKFTA…NNKHTLGKSP (64 aa).

In terms of assembly, homo- and heterodimer with other ZFHD proteins. Interacts with MIF1 and MIF2; these interactions prevent nuclear localization and DNA-binding to inhibit transcription regulation activity. Binds to ZHD2, ZHD3, ZHD4, ZHD5, ZHD6, ZHD7, ZHD8, ZHD9, ZHD10 and ZHD11. As to expression, mostly expressed in flowers and inflorescence.

The protein localises to the nucleus. Functionally, putative transcription factor. The chain is Zinc-finger homeodomain protein 1 (ZHD1) from Arabidopsis thaliana (Mouse-ear cress).